A 1192-amino-acid chain; its full sequence is Chromosome partition protein Smc (1192 aa).

31-38 serves as a coordination point for ATP; it reads PNGSGKSN. Coiled-coil stretches lie at residues 164–197, 234–292, 333–369, and 396–464; these read AGIS…VDEV, LTLS…RSEL, SAIA…RDVE, and EHEA…DAKV. The 115-residue stretch at 522 to 636 folds into the SMC hinge domain; the sequence is KDLVGIVADC…LVDTLATAIG (115 aa). Coiled coils occupy residues 676–736, 772–902, and 986–1030; these read RSEL…AKLH, ELAV…EREA, and GSVN…INAD.

It belongs to the SMC family. Homodimer.

The protein localises to the cytoplasm. Functionally, required for chromosome condensation and partitioning. In Rhodopirellula baltica (strain DSM 10527 / NCIMB 13988 / SH1), this protein is Chromosome partition protein Smc.